Consider the following 178-residue polypeptide: Large ribosomal subunit protein uL6 (178 aa).

Belongs to the universal ribosomal protein uL6 family. In terms of assembly, part of the 50S ribosomal subunit.

Its function is as follows. This protein binds to the 23S rRNA, and is important in its secondary structure. It is located near the subunit interface in the base of the L7/L12 stalk, and near the tRNA binding site of the peptidyltransferase center. This is Large ribosomal subunit protein uL6 from Streptococcus equi subsp. zooepidemicus (strain H70).